The chain runs to 787 residues: Signal transducer and activator of transcription 5B (787 aa).

Tyrosine 90 carries the phosphotyrosine modification. Serine 128 is modified (phosphoserine). The region spanning 589–686 (WNDGAILGFV…EVYSKYYTPV (98 aa)) is the SH2 domain. Tyrosine 682 carries the phosphotyrosine modification. Position 699 is a phosphotyrosine; by HCK, JAK and PTK6 (tyrosine 699).

It belongs to the transcription factor STAT family. Upon activation, forms a homodimer or a heterodimer with a related family member. Binds NR3C1. Interacts with NCOA1. Interacts with NMI. Interacts with SOCS7. Interacts (via SH2 domain) with INSR. Interacts with CPEB3; this inhibits STAT5B-mediated transcriptional activation. In terms of processing, tyrosine phosphorylated in response to signaling via activated KIT, resulting in translocation to the nucleus. Tyrosine phosphorylated in response to signaling via activated FLT3; wild-type FLT3 results in much weaker phosphorylation than constitutively activated mutant FLT3. Alternatively, can be phosphorylated by JAK2. Phosphorylation at Tyr-699 by PTK6 or HCK leads to an increase of its transcriptional activity.

It is found in the cytoplasm. It localises to the nucleus. Carries out a dual function: signal transduction and activation of transcription. Mediates cellular responses to the cytokine KITLG/SCF and other growth factors. Binds to the GAS element and activates PRL-induced transcription. Positively regulates hematopoietic/erythroid differentiation. This chain is Signal transducer and activator of transcription 5B (STAT5B), found in Bos taurus (Bovine).